Reading from the N-terminus, the 119-residue chain is MGTKESTQRRAQRVRRQIRKVAGERPRLSVHRTSKNIYVQVIDDAKGHTIAAASTLEKDLKGSLKTGADTAAAAAIGKLIAERATKAGVKEVVFDRGPYIYHGRVKALAEAAREGGLSF.

This sequence belongs to the universal ribosomal protein uL18 family. Part of the 50S ribosomal subunit; part of the 5S rRNA/L5/L18/L25 subcomplex. Contacts the 5S and 23S rRNAs.

In terms of biological role, this is one of the proteins that bind and probably mediate the attachment of the 5S RNA into the large ribosomal subunit, where it forms part of the central protuberance. The protein is Large ribosomal subunit protein uL18 of Mesorhizobium japonicum (strain LMG 29417 / CECT 9101 / MAFF 303099) (Mesorhizobium loti (strain MAFF 303099)).